The following is a 484-amino-acid chain: Glutathione reductase (484 aa).

Residues Ser-32 and Gly-33 each coordinate FAD. Ser-32 is a glutathione binding site. Arg-39 provides a ligand contact to glutathione. FAD is bound by residues Glu-52, Thr-59, Cys-60, and Lys-68. Cys-60 and Cys-65 are joined by a disulfide. Residue Tyr-122 participates in glutathione binding. Residue Ala-138 participates in FAD binding. Residues Ala-204, Ile-207, Glu-210, Arg-227, and Arg-233 each coordinate NADP(+). Thr-242 contributes to the glutathione binding site. Gly-293 is a binding site for NADP(+). Asp-333 is an FAD binding site. An NADP(+)-binding site is contributed by Glu-339. An FAD-binding site is contributed by Thr-341. Position 349 (Arg-349) interacts with glutathione. Val-374 is an NADP(+) binding site. Residue Lys-426 coordinates glutathione. An FAD-binding site is contributed by His-473. The active-site Proton acceptor is the His-473.

Belongs to the class-I pyridine nucleotide-disulfide oxidoreductase family. As to quaternary structure, homodimer. It depends on FAD as a cofactor.

It is found in the cytoplasm. The protein localises to the mitochondrion. The catalysed reaction is 2 glutathione + NADP(+) = glutathione disulfide + NADPH + H(+). Functionally, catalyzes the reduction of glutathione disulfide (GSSG) to reduced glutathione (GSH). Constitutes the major mechanism to maintain a high GSH:GSSG ratio in the cytosol. The protein is Glutathione reductase (GLR1) of Kluyveromyces lactis (strain ATCC 8585 / CBS 2359 / DSM 70799 / NBRC 1267 / NRRL Y-1140 / WM37) (Yeast).